The chain runs to 506 residues: Aldehyde dehydrogenase (506 aa).

Position 218–224 (218–224 (GFGLEAG)) interacts with NAD(+). Active-site residues include Glu262 and Cys301.

The protein belongs to the aldehyde dehydrogenase family.

The catalysed reaction is an aldehyde + NAD(+) + H2O = a carboxylate + NADH + 2 H(+). The protein is Aldehyde dehydrogenase of Rhodospirillum rubrum (strain ATCC 11170 / ATH 1.1.1 / DSM 467 / LMG 4362 / NCIMB 8255 / S1).